The following is a 119-amino-acid chain: Large ribosomal subunit protein bL20 (119 aa).

This sequence belongs to the bacterial ribosomal protein bL20 family.

Functionally, binds directly to 23S ribosomal RNA and is necessary for the in vitro assembly process of the 50S ribosomal subunit. It is not involved in the protein synthesizing functions of that subunit. This chain is Large ribosomal subunit protein bL20, found in Cellvibrio japonicus (strain Ueda107) (Pseudomonas fluorescens subsp. cellulosa).